The chain runs to 311 residues: uncharacterized protein (311 aa).

A run of 9 helical transmembrane segments spans residues 11–31 (LDNW…GYLS), 34–54 (VGIV…FLSL), 72–92 (LAIS…LFGI), 101–121 (HVIV…FVAQ), 147–167 (IEGI…WYLM), 198–218 (WFGV…FALS), 233–253 (GFIA…SIVI), 257–277 (FALA…TYLL), and 279–299 (TIPF…NVGP).

Its subcellular location is the cell membrane. This is an uncharacterized protein from Mycoplasma pneumoniae (strain ATCC 29342 / M129 / Subtype 1) (Mycoplasmoides pneumoniae).